The sequence spans 300 residues: Nucleotide-binding protein Dshi_0209 (300 aa).

ATP is bound at residue 20–27 (GPSGAGRT). Residue 67–70 (DART) coordinates GTP.

The protein belongs to the RapZ-like family.

Functionally, displays ATPase and GTPase activities. The protein is Nucleotide-binding protein Dshi_0209 of Dinoroseobacter shibae (strain DSM 16493 / NCIMB 14021 / DFL 12).